We begin with the raw amino-acid sequence, 87 residues long: Neurotoxin Cex4 (87 aa).

The N-terminal stretch at 1 to 19 (MNSLLMITACLFLIGTVWA) is a signal peptide. The 66-residue stretch at 20 to 85 (KEGYLVNKST…TYPLPNKSCG (66 aa)) folds into the LCN-type CS-alpha/beta domain. 4 disulfide bridges follow: Cys-31–Cys-84, Cys-35–Cys-60, Cys-44–Cys-65, and Cys-48–Cys-67. Cys-84 is subject to Cysteine amide. The propeptide occupies 85-87 (GRK).

The protein belongs to the long (4 C-C) scorpion toxin superfamily. Sodium channel inhibitor family. Beta subfamily. Expressed by the venom gland.

It localises to the secreted. Beta toxins bind voltage-independently at site-4 of sodium channels (Nav) and shift the voltage of activation toward more negative potentials thereby affecting sodium channel activation and promoting spontaneous and repetitive firing. The polypeptide is Neurotoxin Cex4 (Centruroides exilicauda (Bark scorpion)).